The following is a 142-amino-acid chain: Ribonuclease VapC44 (142 aa).

The PINc domain occupies 4–126 (LLDVNVLLAL…GRFVTFDQSI (123 aa)). Mg(2+) is bound by residues D6 and D105.

It belongs to the PINc/VapC protein family. Mg(2+) serves as cofactor.

Toxic component of a type II toxin-antitoxin (TA) system. An RNase. Its cognate antitoxin is VapB44. The protein is Ribonuclease VapC44 of Mycobacterium tuberculosis (strain CDC 1551 / Oshkosh).